Here is a 396-residue protein sequence, read N- to C-terminus: MAMAMDRIVFSPSSYVYRPCQARGSRSSRVSMASTIRSATTEVTNGRKLYIPPREVHVQVKHSMPPQKLEIFKSLEGWADETLLTYLKPVEKSWQPTDFLPEPESEGFYDQVKELRERCKELPDDYFVVLVGDMITEEALPTYQTMLNTLDGVRDETGASPTPWAIWTRAWTAEENRHGDLLNKYLYLSGRVDMRQIEKTIQYLIGSGMDPKTENNPYLGFIYTSFQERATFISHGNTARLAKDRGDLKLAQICGTIAADERRHETAYTKIVEKLFEIDPDGTILGLADMMKKKISMPAHLMYDGQDDNLFEHFSTVAQRLGVYTAKDYADILEFLVERWNVETLTDLSSEGHRAQDFVCGLPARIRKIEERAQGRAKEAAKNIPFSWIFGRNIRA.

Residues 1-29 constitute a chloroplast transit peptide; the sequence is MAMAMDRIVFSPSSYVYRPCQARGSRSSR. Residues E137, E175, H178, E228, E261, and H264 each contribute to the Fe cation site.

This sequence belongs to the fatty acid desaturase type 2 family. In terms of assembly, homodimer. Fe(2+) serves as cofactor. Ubiquitously expressed with a preference in leaves, flowers and stems.

It is found in the plastid. Its subcellular location is the chloroplast stroma. It carries out the reaction octadecanoyl-[ACP] + 2 reduced [2Fe-2S]-[ferredoxin] + O2 + 2 H(+) = (9Z)-octadecenoyl-[ACP] + 2 oxidized [2Fe-2S]-[ferredoxin] + 2 H2O. Its pathway is lipid metabolism; fatty acid metabolism. Functionally, converts stearoyl-ACP to oleoyl-ACP by introduction of a cis double bond between carbons 9 and 10 of the acyl chain. The protein is Stearoyl-[acyl-carrier-protein] 9-desaturase 5, chloroplastic (S-ACP-DES5) of Arabidopsis thaliana (Mouse-ear cress).